The primary structure comprises 1058 residues: Carbamoyl phosphate synthase large chain (1058 aa).

Residues 1–401 (MPKRTDIQKI…SLLKACRSLE (401 aa)) are carboxyphosphate synthetic domain. ATP is bound by residues Arg129, Arg169, Gly175, Gly176, Arg208, Ile210, Glu215, Gly241, Ile242, His243, Gln284, and Glu298. The region spanning 133–327 (KQLMEELEQP…IAKLAAKIAV (195 aa)) is the ATP-grasp 1 domain. 3 residues coordinate Mg(2+): Gln284, Glu298, and Asn300. Mn(2+) contacts are provided by Gln284, Glu298, and Asn300. Residues 402–546 (IGVHHNEIPE…YSTYGWENES (145 aa)) are oligomerization domain. Positions 547–929 (IRSDKESVLV…ALYKAFEASY (383 aa)) are carbamoyl phosphate synthetic domain. The region spanning 671-861 (EQALKELDIP…MAQVATKLIL (191 aa)) is the ATP-grasp 2 domain. Residues Arg707, Ser746, Ile748, Glu752, Gly777, Val778, His779, Ser780, Gln820, and Glu832 each coordinate ATP. The Mg(2+) site is built by Gln820, Glu832, and Asn834. 3 residues coordinate Mn(2+): Gln820, Glu832, and Asn834. Residues 930–1058 (LHLPTFGNVV…ESRSFVTEAI (129 aa)) form the MGS-like domain. Residues 930–1058 (LHLPTFGNVV…ESRSFVTEAI (129 aa)) form an allosteric domain region.

It belongs to the CarB family. As to quaternary structure, composed of two chains; the small (or glutamine) chain promotes the hydrolysis of glutamine to ammonia, which is used by the large (or ammonia) chain to synthesize carbamoyl phosphate. Tetramer of heterodimers (alpha,beta)4. Mg(2+) serves as cofactor. Mn(2+) is required as a cofactor.

It catalyses the reaction hydrogencarbonate + L-glutamine + 2 ATP + H2O = carbamoyl phosphate + L-glutamate + 2 ADP + phosphate + 2 H(+). It carries out the reaction hydrogencarbonate + NH4(+) + 2 ATP = carbamoyl phosphate + 2 ADP + phosphate + 2 H(+). The protein operates within amino-acid biosynthesis; L-arginine biosynthesis; carbamoyl phosphate from bicarbonate: step 1/1. Its pathway is pyrimidine metabolism; UMP biosynthesis via de novo pathway; (S)-dihydroorotate from bicarbonate: step 1/3. In terms of biological role, large subunit of the glutamine-dependent carbamoyl phosphate synthetase (CPSase). CPSase catalyzes the formation of carbamoyl phosphate from the ammonia moiety of glutamine, carbonate, and phosphate donated by ATP, constituting the first step of 2 biosynthetic pathways, one leading to arginine and/or urea and the other to pyrimidine nucleotides. The large subunit (synthetase) binds the substrates ammonia (free or transferred from glutamine from the small subunit), hydrogencarbonate and ATP and carries out an ATP-coupled ligase reaction, activating hydrogencarbonate by forming carboxy phosphate which reacts with ammonia to form carbamoyl phosphate. The protein is Carbamoyl phosphate synthase large chain of Streptococcus pneumoniae (strain JJA).